The primary structure comprises 214 residues: Pyridoxine/pyridoxamine 5'-phosphate oxidase (214 aa).

Residues 8–11 (RKSY) and Lys-67 each bind substrate. Residues 62-67 (RVVLLK), 77-78 (YT), Lys-84, and Gln-106 contribute to the FMN site. Substrate contacts are provided by Tyr-124, Arg-128, and Ser-132. FMN is bound by residues 141 to 142 (QS) and Trp-186. Residue 192 to 194 (RLH) participates in substrate binding. An FMN-binding site is contributed by Arg-196.

It belongs to the pyridoxamine 5'-phosphate oxidase family. Homodimer. FMN is required as a cofactor.

The enzyme catalyses pyridoxamine 5'-phosphate + O2 + H2O = pyridoxal 5'-phosphate + H2O2 + NH4(+). The catalysed reaction is pyridoxine 5'-phosphate + O2 = pyridoxal 5'-phosphate + H2O2. It functions in the pathway cofactor metabolism; pyridoxal 5'-phosphate salvage; pyridoxal 5'-phosphate from pyridoxamine 5'-phosphate: step 1/1. It participates in cofactor metabolism; pyridoxal 5'-phosphate salvage; pyridoxal 5'-phosphate from pyridoxine 5'-phosphate: step 1/1. Its function is as follows. Catalyzes the oxidation of either pyridoxine 5'-phosphate (PNP) or pyridoxamine 5'-phosphate (PMP) into pyridoxal 5'-phosphate (PLP). The sequence is that of Pyridoxine/pyridoxamine 5'-phosphate oxidase from Flavobacterium johnsoniae (strain ATCC 17061 / DSM 2064 / JCM 8514 / BCRC 14874 / CCUG 350202 / NBRC 14942 / NCIMB 11054 / UW101) (Cytophaga johnsonae).